A 344-amino-acid chain; its full sequence is Dihydroorotase (344 aa).

Positions 13 and 15 each coordinate Zn(2+). Residues 15–17 and N41 each bind substrate; that span reads HFR. Positions 98, 135, and 173 each coordinate Zn(2+). An N6-carboxylysine modification is found at K98. A substrate-binding site is contributed by H135. Residue L218 coordinates substrate. D246 is a binding site for Zn(2+). Residue D246 is part of the active site. The substrate site is built by H250 and A262.

It belongs to the metallo-dependent hydrolases superfamily. DHOase family. Class II DHOase subfamily. In terms of assembly, homodimer. Zn(2+) serves as cofactor.

It carries out the reaction (S)-dihydroorotate + H2O = N-carbamoyl-L-aspartate + H(+). Its pathway is pyrimidine metabolism; UMP biosynthesis via de novo pathway; (S)-dihydroorotate from bicarbonate: step 3/3. In terms of biological role, catalyzes the reversible cyclization of carbamoyl aspartate to dihydroorotate. In Shewanella sediminis (strain HAW-EB3), this protein is Dihydroorotase.